The sequence spans 569 residues: Sulfite reductase [NADPH] hemoprotein beta-component (569 aa).

Positions 433, 439, 478, and 482 each coordinate [4Fe-4S] cluster. Residue cysteine 482 coordinates siroheme.

Belongs to the nitrite and sulfite reductase 4Fe-4S domain family. In terms of assembly, alpha(8)-beta(8). The alpha component is a flavoprotein, the beta component is a hemoprotein. Siroheme serves as cofactor. The cofactor is [4Fe-4S] cluster.

The enzyme catalyses hydrogen sulfide + 3 NADP(+) + 3 H2O = sulfite + 3 NADPH + 4 H(+). Its pathway is sulfur metabolism; hydrogen sulfide biosynthesis; hydrogen sulfide from sulfite (NADPH route): step 1/1. Component of the sulfite reductase complex that catalyzes the 6-electron reduction of sulfite to sulfide. This is one of several activities required for the biosynthesis of L-cysteine from sulfate. This chain is Sulfite reductase [NADPH] hemoprotein beta-component, found in Blochmanniella floridana.